A 982-amino-acid chain; its full sequence is NACHT, LRR and PYD domains-containing protein 4C (982 aa).

In terms of domain architecture, Pyrin spans 1–93; that stretch reads MASFFSDFGL…MERAGREIAG (93 aa). The 324-residue stretch at 148 to 471 folds into the NACHT domain; the sequence is HMVFLQGAAG…FYLLKSHMDH (324 aa). 154–161 serves as a coordination point for ATP; sequence GAAGIGKS. LRR repeat units lie at residues 594 to 617, 689 to 716, 746 to 773, 802 to 825, 827 to 844, 859 to 882, and 916 to 940; these read CSTLKKLSLSTQNVLSEGQEHSYT, NQCLQHLDLNLTFLSHGDVKLLCDVLSQ, SKMLKHLNLSSNNLDKGISSLSKALCHP, NKTLNHLDISSNDLKDEGLKVLCG, LSLPDSVLKSLSVRYCLI, NQNLRNLQVSNNKIEDAGVKLLCD, and CKTLWGINLQENALDHSGLIVLFEA.

This sequence belongs to the NLRP family.

Its function is as follows. May be involved in inflammation and recognition of cytosolic pathogen-associated molecular patterns (PAMPs) not intercepted by membrane-bound receptors. The polypeptide is NACHT, LRR and PYD domains-containing protein 4C (Nlrp4c) (Mus musculus (Mouse)).